A 471-amino-acid chain; its full sequence is Coronin-6 (471 aa).

5 WD repeats span residues 79–119, 129–169, 173–212, 216–259, and 264–304; these read GHTG…PVRN, GHSK…VLLS, IHPD…VVAE, PHEG…EPVA, and DTSN…PFVH. The segment at 410-433 is disordered; it reads ILDVRPPASPRRSQSASEAPLSQH. A compositionally biased stretch (low complexity) spans 419 to 429; it reads PRRSQSASEAP. Residues 426 to 468 adopt a coiled-coil conformation; the sequence is SEAPLSQHTLETLLEEIKALRDRVQAQEERITALENMLCELVD.

The polypeptide is Coronin-6 (Coro6) (Mus musculus (Mouse)).